The sequence spans 356 residues: Putative methylthioribose-1-phosphate isomerase (356 aa).

Residues 57–59 (RGA), Arg100, and Gln206 each bind substrate. The active-site Proton donor is Asp247. Residue 257-258 (NK) coordinates substrate.

This sequence belongs to the eIF-2B alpha/beta/delta subunits family. MtnA subfamily.

It catalyses the reaction 5-(methylsulfanyl)-alpha-D-ribose 1-phosphate = 5-(methylsulfanyl)-D-ribulose 1-phosphate. Its function is as follows. Catalyzes the interconversion of methylthioribose-1-phosphate (MTR-1-P) into methylthioribulose-1-phosphate (MTRu-1-P). The sequence is that of Putative methylthioribose-1-phosphate isomerase (aIF-2BI) from Pyrococcus abyssi (strain GE5 / Orsay).